We begin with the raw amino-acid sequence, 153 residues long: Protein ripply2.2 (153 aa).

The short motif at 58-61 is the WRPW motif; required for transcriptional repression and interaction with tle4 element; the sequence is WRPW. A ripply homology domain region spans residues 93-128; that stretch reads HPVRLFWPKSKLLDNTYQEAADLLRNFPVQATISLY. The interval 127–153 is disordered; it reads LYNDSESDTDNEEDSSEEEQDSGFESE. Acidic residues predominate over residues 131–153; sequence SESDTDNEEDSSEEEQDSGFESE.

It belongs to the ripply family. Interacts with tle4 and tbx6, and mediates interaction between these proteins. As to expression, expressed in the presomitic mesoderm (PSM) in the anterior halves of somitomeres S-I, S-II and S-III.

The protein localises to the nucleus. Its function is as follows. Required during somitogenesis for the formation of somite boundaries. Represses the expression of genes involved in somite segmentation by acting with the corepressor tle4 to down-regulate the transcriptional activity of tbx6. May act by regulating the activity of tle4. Represses transcription of delta2, thy1 and ripply2.2/bowline itself. This is Protein ripply2.2 (ripply2.2) from Xenopus laevis (African clawed frog).